A 236-amino-acid polypeptide reads, in one-letter code: Purine nucleoside phosphorylase DeoD-type (236 aa).

Histidine 5 is a binding site for a purine D-ribonucleoside. Residues glycine 21, arginine 25, arginine 44, and 88–91 each bind phosphate; that span reads RIGS. A purine D-ribonucleoside contacts are provided by residues 180–182 and 204–205; these read EME and SD. Aspartate 205 functions as the Proton donor in the catalytic mechanism.

Belongs to the PNP/UDP phosphorylase family. As to quaternary structure, homohexamer; trimer of homodimers.

It carries out the reaction a purine D-ribonucleoside + phosphate = a purine nucleobase + alpha-D-ribose 1-phosphate. The catalysed reaction is a purine 2'-deoxy-D-ribonucleoside + phosphate = a purine nucleobase + 2-deoxy-alpha-D-ribose 1-phosphate. Functionally, catalyzes the reversible phosphorolytic breakdown of the N-glycosidic bond in the beta-(deoxy)ribonucleoside molecules, with the formation of the corresponding free purine bases and pentose-1-phosphate. The polypeptide is Purine nucleoside phosphorylase DeoD-type (Tolumonas auensis (strain DSM 9187 / NBRC 110442 / TA 4)).